We begin with the raw amino-acid sequence, 73 residues long: MNLDQPSTENMKYILDTLAEELQIVNRSIMEVEDYNLDKYEDLKMMYEMVKTKGQLSALEKQAFIQELSSIRK.

It belongs to the UPF0435 family.

The protein is UPF0435 protein OB1527 of Oceanobacillus iheyensis (strain DSM 14371 / CIP 107618 / JCM 11309 / KCTC 3954 / HTE831).